Here is a 496-residue protein sequence, read N- to C-terminus: Solute carrier family 2, facilitated glucose transporter member 11 (496 aa).

At 1–11 the chain is on the cytoplasmic side; it reads MRALRRLIQGR. A helical membrane pass occupies residues 12 to 32; sequence ILLLTICAAGIGGTFQFGYNL. At 33-61 the chain is on the extracellular side; sequence SIINAPTLHIQEFTNETWQARTGEPLPDH. N-linked (GlcNAc...) asparagine glycosylation is present at Asn-47. A helical transmembrane segment spans residues 62-82; sequence LVLLMWSLIVSLYPLGGLFGA. Residues 83-97 lie on the Cytoplasmic side of the membrane; it reads LLAGPLAITLGRKKS. Residues 98-118 traverse the membrane as a helical segment; sequence LLVNNIFVVSAAILFGFSRKA. Over 119–128 the chain is Extracellular; that stretch reads GSFEMIMLGR. Residues 129–149 traverse the membrane as a helical segment; the sequence is LLVGVNAGVSMNIQPMYLGES. At 150 to 157 the chain is on the cytoplasmic side; the sequence is APKELRGA. Residues 158 to 178 form a helical membrane-spanning segment; it reads VAMSSAIFTALGIVMGQVVGL. Over 179–187 the chain is Extracellular; sequence RELLGGPQA. A helical membrane pass occupies residues 188–208; sequence WPLLLASCLVPGALQLASLPL. Topologically, residues 209–273 are cytoplasmic; that stretch reads LPESPRYLLI…LFQHRALRRQ (65 aa). Residues 274–294 traverse the membrane as a helical segment; the sequence is VTSLVVLGSAMELCGNDSVYA. Residues 295 to 311 lie on the Extracellular side of the membrane; sequence YASSVFRKAGVPEAKIQ. The helical transmembrane segment at 312–332 threads the bilayer; it reads YAIIGTGSCELLTAVVSCVVI. The Cytoplasmic segment spans residues 333 to 338; it reads ERVGRR. Residues 339-359 traverse the membrane as a helical segment; that stretch reads VLLIGGYSLMTCWGSIFTVAL. Topologically, residues 360–364 are extracellular; it reads CLQSS. The helical transmembrane segment at 365-385 threads the bilayer; that stretch reads FPWTLYLAMACIFAFILSFGI. Over 386-408 the chain is Cytoplasmic; that stretch reads GPAGVTGILATELFDQMARPAAC. Residues 409–429 form a helical membrane-spanning segment; it reads MVCGALMWIMLILVGLGFPFI. Residues 430 to 435 lie on the Extracellular side of the membrane; sequence MEALSH. The helical transmembrane segment at 436 to 456 threads the bilayer; sequence FLYVPFLGVCVCGAIYTGLFL. At 457-496 the chain is on the cytoplasmic side; that stretch reads PETKGKTFQEISKELHRLNFPRRAQGPTWRSLEVIQSTEL.

It belongs to the major facilitator superfamily. Sugar transporter (TC 2.A.1.1) family. Glucose transporter subfamily. In terms of tissue distribution, expressed in heart and skeletal muscle.

The protein localises to the cell membrane. It catalyses the reaction D-glucose(out) = D-glucose(in). Its function is as follows. Facilitative glucose transporter. This Homo sapiens (Human) protein is Solute carrier family 2, facilitated glucose transporter member 11.